Consider the following 1374-residue polypeptide: MANTLVGRKRIRKFFGKIKEVAEMPNLIEVQKASYDQFLMVDEPEGGRADEGLQSVFKSVFPISDFASTALLEFVRYTFEAPKYDVDECRQRGITFAAPLKVTLRLIVFDVDPDTQAKSVKDIKEQDVYMGDMPLMTENGTFIVNGTERVIVSQMHRSPGVFFDHDKGKTHSSGKLLFAARIIPYRGSWLDVEFDAKDIVHVRIDRKRKLPATSLLYALGLDGEEILSTFYNKVVYDRDGADWRVPFDAERMKGMKATVDLIDADSGEVVLEAGKKLNARNARQITEKGTKFLKATDEDLVGQYVAEDLVNAQTGEIWAEAGEEVTDKLLKSLEEVGITELPVLDIDHVNIGPYIRNTLAVDKNSNREGALFDIYRVMRPGEPPTLETAEAMFHSLFFDSERYDLSAVGRVKMNMRLDLDAADTVRTLRKEDMLAVVKALVELRDGKGEVDDIDHLGNRRVRSVGELMENQYRLGLLRMERAIRERMSQVDIDTVMPQDLINAKPAAAAVREFFGSSQLSQFMDQTNPLSEVTHKRRLSALGPGGLTRERAGFEVRDVHPTHYGRICPIETPEGPNIGLINSLATFARVNKYGFIETPFRRVRDGVVTDEVAYLSAMEEAKYYVAQANAQMDENRKLTEDLVVCRRAGEVIVVGPERVDLMDVSPKQLVSVAAALIPFLENDDANRALMGSNMQRQAVPLVRADAPFVGTGMEAVVARDSGAAIAARRAGIIDQVDATRIVIRATEEADANKPGVDIYRLQKFQRSNQSTCITQKPLVRVGEFVKKGEIIADGPSTEFGELALGRNVLVAFMPWNGYNFEDSILLSERIVKDDVFTSIHIEEFEVMARDTKLGPEEITRDIPNVSEEALKNLDEAGIVYIGAEVNAGDILVGKITPKGESPMTPEEKLLRAIFGEKASDVRDTSLRVPPGVTGTIVEVRVFNRHGVDKDERAQAIEREEIERLAKDRDDEQAILDRNTYARLADVLIGQAPVAGPKGFKKDTTLTRELINDYPRSQWWQFAVIDDRLMTEMEAMQKQYDESKKRLEQRFLDKVEKLQRGDELPPGVMKMVKVFVAVKRKIQPGDKMAGRHGNKGVVSRIVPIEDMPFLEDGTHADIVLNPLGVPSRMNVGQILETHLGWAAAGLGRKVSKAVDAYLKTQDIAPLREEMKAIYSPGELDGLTDEELAEAGNNVRRGVPMATPVFNGAKEADIEQMLEMAGLDRSAQSTLYDGRTGEPFDRKVTMGYIYMLKLHHLVDDKIHARSIGPYSLVTQQPLGGKAQFGGQRFGEMEVWALEAYGAAYTLQEMLTVKSDDVAGRTKVYEAIVRGDDTFEAGIPESFNVLVKEMRSLGLNVELTSSKKAANDQLEPPADAAE.

Belongs to the RNA polymerase beta chain family. In terms of assembly, the RNAP catalytic core consists of 2 alpha, 1 beta, 1 beta' and 1 omega subunit. When a sigma factor is associated with the core the holoenzyme is formed, which can initiate transcription.

It catalyses the reaction RNA(n) + a ribonucleoside 5'-triphosphate = RNA(n+1) + diphosphate. DNA-dependent RNA polymerase catalyzes the transcription of DNA into RNA using the four ribonucleoside triphosphates as substrates. The polypeptide is DNA-directed RNA polymerase subunit beta (Methylobacterium radiotolerans (strain ATCC 27329 / DSM 1819 / JCM 2831 / NBRC 15690 / NCIMB 10815 / 0-1)).